Here is a 133-residue protein sequence, read N- to C-terminus: Putative actin-depolymerizing factor 11 (133 aa).

Residues 1 to 133 (MVLHDDCKLT…SLDAIRRRIN (133 aa)) form the ADF-H domain.

The protein belongs to the actin-binding proteins ADF family.

Its subcellular location is the cytoplasm. It localises to the cytoskeleton. Its function is as follows. Actin-depolymerizing protein. Severs actin filaments (F-actin) and binds to actin monomers. The polypeptide is Putative actin-depolymerizing factor 11 (ADF11) (Arabidopsis thaliana (Mouse-ear cress)).